We begin with the raw amino-acid sequence, 182 residues long: Signal peptidase I (182 aa).

Over 1–13 (MTKQKEKRGRRWP) the chain is Cytoplasmic. A helical transmembrane segment spans residues 14 to 30 (WFVAVCVVATLRLFVFS). The Extracellular portion of the chain corresponds to 31–182 (NYVVEGKSMM…WPFKQFAFQF (152 aa)). Active-site residues include S38 and K79.

It belongs to the peptidase S26 family.

It is found in the cell membrane. The catalysed reaction is Cleavage of hydrophobic, N-terminal signal or leader sequences from secreted and periplasmic proteins.. The sequence is that of Signal peptidase I (lepB) from Bacillus caldolyticus.